We begin with the raw amino-acid sequence, 299 residues long: ATP phosphoribosyltransferase (299 aa).

The protein belongs to the ATP phosphoribosyltransferase family. Long subfamily. Equilibrium between an active dimeric form, an inactive hexameric form and higher aggregates. Interconversion between the various forms is largely reversible and is influenced by the natural substrates and inhibitors of the enzyme. Requires Mg(2+) as cofactor.

It localises to the cytoplasm. It carries out the reaction 1-(5-phospho-beta-D-ribosyl)-ATP + diphosphate = 5-phospho-alpha-D-ribose 1-diphosphate + ATP. It functions in the pathway amino-acid biosynthesis; L-histidine biosynthesis; L-histidine from 5-phospho-alpha-D-ribose 1-diphosphate: step 1/9. Its activity is regulated as follows. Feedback inhibited by histidine. Its function is as follows. Catalyzes the condensation of ATP and 5-phosphoribose 1-diphosphate to form N'-(5'-phosphoribosyl)-ATP (PR-ATP). Has a crucial role in the pathway because the rate of histidine biosynthesis seems to be controlled primarily by regulation of HisG enzymatic activity. The protein is ATP phosphoribosyltransferase of Escherichia coli O17:K52:H18 (strain UMN026 / ExPEC).